Here is a 154-residue protein sequence, read N- to C-terminus: Large ribosomal subunit protein uL23 (154 aa).

The tract at residues 1–39 (MAPAKADPSKKSDPKAQAAKVAKAVKSGSTLKKKSQKIR) is disordered. Residues 15-26 (KAQAAKVAKAVK) show a composition bias toward low complexity.

Belongs to the universal ribosomal protein uL23 family.

Functionally, this protein binds to a specific region on the 26S rRNA. This Nicotiana tabacum (Common tobacco) protein is Large ribosomal subunit protein uL23 (RPL23A).